Consider the following 828-residue polypeptide: Periplasmic nitrate reductase (828 aa).

Positions methionine 1–alanine 31 form a signal peptide, tat-type signal. The region spanning isoleucine 39–aspartate 95 is the 4Fe-4S Mo/W bis-MGD-type domain. Positions 46, 49, 53, and 81 each coordinate [4Fe-4S] cluster. Residues lysine 83, glutamine 150, asparagine 175, cysteine 179, tryptophan 212–methionine 219, serine 243–histidine 247, glutamine 262–aspartate 264, methionine 372, glutamine 376, asparagine 482, serine 508–aspartate 509, lysine 531, aspartate 558, and threonine 718–threonine 727 each bind Mo-bis(molybdopterin guanine dinucleotide). Substrate is bound at residue phenylalanine 794. Mo-bis(molybdopterin guanine dinucleotide) contacts are provided by asparagine 802 and lysine 819.

It belongs to the prokaryotic molybdopterin-containing oxidoreductase family. NasA/NapA/NarB subfamily. As to quaternary structure, component of the periplasmic nitrate reductase NapAB complex composed of NapA and NapB. [4Fe-4S] cluster is required as a cofactor. The cofactor is Mo-bis(molybdopterin guanine dinucleotide). Post-translationally, predicted to be exported by the Tat system. The position of the signal peptide cleavage has not been experimentally proven.

Its subcellular location is the periplasm. The enzyme catalyses 2 Fe(II)-[cytochrome] + nitrate + 2 H(+) = 2 Fe(III)-[cytochrome] + nitrite + H2O. Functionally, catalytic subunit of the periplasmic nitrate reductase complex NapAB. Receives electrons from NapB and catalyzes the reduction of nitrate to nitrite. The protein is Periplasmic nitrate reductase of Pectobacterium atrosepticum (strain SCRI 1043 / ATCC BAA-672) (Erwinia carotovora subsp. atroseptica).